A 151-amino-acid chain; its full sequence is MPDLSHEASAKYWFEYLDPMIYRVITFMESVENWTLDGNPELEEAMKQLGQELDDIEKIDLGLLAEEDKFIRIVGNIKSGRGLRLLQAIDTVHPGSASRVLIHAEETSLSSSDPAGFFLKRNIVFERLRLLSRVFCQYRLKLVLRALEGDE.

In terms of assembly, the T4BSS is a complex nanomachine composed of several subcomplexes. This subunit is part of the Type IV Coupling Complex (T4CC), a subcomplex composed of the DotLMNYZ core and the IcmSW-LvgA adapter subunits, linked by the C-terminal tail of DotL. Interacts with IcmS. IcmS and IcmW form a stable complex. Interaction with IcmS greatly enhances the stability of IcmW. Interacts directly with the type 4 coupling protein DotL. Interacts with LvgA. Interacts with effector proteins.

It is found in the cytoplasm. Interaction with DotL is critical for the export of IcmSW-dependent substrates. Functionally, component of the Dot/Icm type IVB secretion system (T4BSS), which is used to inject bacterial effector proteins into eukaryotic host cells. Part of a subcomplex which recruits effector proteins and delivers them to the core transmembrane subcomplex. The IcmS/IcmW protein complex plays an important role in protein translocation by interacting with multiple Dot/Icm effector proteins to facilitate their translocation into host cells. Interaction promotes conformational changes in the effector protein, which may facilitate display of a C-terminal translocation signal. May maintain the substrates in a translocation competent form. Required for intracellular growth in host cells, replicative phagosome formation and phagosome trafficking. The chain is Type 4 adapter protein IcmW from Legionella pneumophila subsp. pneumophila (strain Philadelphia 1 / ATCC 33152 / DSM 7513).